We begin with the raw amino-acid sequence, 126 residues long: UPF0235 protein C15orf40 homolog (126 aa).

The tract at residues 1 to 33 (MPKKAGATSKGKNQTKEPETPPPPTGPVATDSK) is disordered. S89 bears the Phosphoserine mark.

This sequence belongs to the UPF0235 family.

The polypeptide is UPF0235 protein C15orf40 homolog (Rattus norvegicus (Rat)).